A 553-amino-acid chain; its full sequence is Zinc finger protein Elbow (553 aa).

2 disordered regions span residues 59–243 (STKQ…MHSP) and 388–407 (GGGG…SGGS). 2 stretches are compositionally biased toward low complexity: residues 96–110 (SPVS…TGSV) and 121–134 (SSSS…TFKP). 3 stretches are compositionally biased toward polar residues: residues 137 to 146 (PNNNISNITT), 153 to 173 (TNLS…KSMT), and 224 to 236 (TAST…NSKE). Residues 287–480 (SASAAAAAAS…PDAVLSAAAA (194 aa)) form a self-association region. Residues 287-553 (SASAAAAAAS…YGPRMGSSHP (267 aa)) are interaction with noc. Residues 388–406 (GGGGGGSSKSSGSQGGSGG) show a composition bias toward gly residues. The C2H2-type zinc finger occupies 437–466 (YVCSWIGSDAAYCGKRFGTSDDLFQHLRTH).

The protein belongs to the Elbow/Noc family. In terms of assembly, self-associates. Interacts with gro and noc.

In terms of biological role, may negatively regulate Notch-induced cell proliferation in the eye-head primordium. May act in leg and wing primordia to negatively regulate body-wall specifying genes and thereby promote appendage formation. Required for tracheal development. This Drosophila melanogaster (Fruit fly) protein is Zinc finger protein Elbow (elB).